Consider the following 142-residue polypeptide: Coiled-coil-helix-coiled-coil-helix domain-containing protein 10, mitochondrial (142 aa).

A mitochondrion-targeting transit peptide spans 1–16 (MPRGSRSAASRPASRP). Low complexity predominate over residues 1 to 20 (MPRGSRSAASRPASRPAAPS). Disordered stretches follow at residues 1–45 (MPRG…PGLM) and 68–97 (ALTG…PQPL). Positions 21-39 (AHPPAHPPPSAAAPAPAPS) are enriched in pro residues. Positions 80–90 (PSQPAVQQAPT) are enriched in low complexity. The CHCH domain maps to 99-140 (MGPCAYEIRQFLDCSTTQSDLSLCEGFSEALKQCKYYHGLSS). 2 consecutive short sequence motifs (cx9C motif) follow at residues 102–112 (CAYEIRQFLDC) and 122–132 (CEGFSEALKQC). Intrachain disulfides connect Cys102–Cys132 and Cys112–Cys122.

In terms of tissue distribution, ubiquitously expressed. Higher expression is observed in heart and liver.

It is found in the mitochondrion intermembrane space. Functionally, may be involved in the maintenance of mitochondrial organization and mitochondrial cristae structure. In Homo sapiens (Human), this protein is Coiled-coil-helix-coiled-coil-helix domain-containing protein 10, mitochondrial (CHCHD10).